A 180-amino-acid polypeptide reads, in one-letter code: NADH-quinone oxidoreductase subunit I (180 aa).

4Fe-4S ferredoxin-type domains lie at 50–80 and 90–119; these read LTRDPDGEERCVACNLCAVACPVGCISLQKA and EFFRINFSRCIFCGLCEEACPTTAIQLTPD. [4Fe-4S] cluster contacts are provided by C60, C63, C66, C70, C99, C102, C105, and C109.

Belongs to the complex I 23 kDa subunit family. NDH-1 is composed of 13 different subunits. Subunits NuoA, H, J, K, L, M, N constitute the membrane sector of the complex. It depends on [4Fe-4S] cluster as a cofactor.

The protein resides in the cell inner membrane. The enzyme catalyses a quinone + NADH + 5 H(+)(in) = a quinol + NAD(+) + 4 H(+)(out). NDH-1 shuttles electrons from NADH, via FMN and iron-sulfur (Fe-S) centers, to quinones in the respiratory chain. The immediate electron acceptor for the enzyme in this species is believed to be ubiquinone. Couples the redox reaction to proton translocation (for every two electrons transferred, four hydrogen ions are translocated across the cytoplasmic membrane), and thus conserves the redox energy in a proton gradient. The chain is NADH-quinone oxidoreductase subunit I from Yersinia enterocolitica serotype O:8 / biotype 1B (strain NCTC 13174 / 8081).